Reading from the N-terminus, the 370-residue chain is Homoserine kinase (370 aa).

The N-terminal 34 residues, 1 to 34 (MASLCFQSPSKPISYFQPKSNPSPPLFAKVSVFR), are a transit peptide targeting the chloroplast. 143–154 (LPLGSGLGSSAA) serves as a coordination point for ATP.

The protein belongs to the GHMP kinase family. Homoserine kinase subfamily.

The protein resides in the plastid. It localises to the chloroplast stroma. The enzyme catalyses L-homoserine + ATP = O-phospho-L-homoserine + ADP + H(+). Its pathway is amino-acid biosynthesis; L-threonine biosynthesis; L-threonine from L-aspartate: step 4/5. In terms of biological role, catalyzes the ATP-dependent phosphorylation of L-homoserine to L-homoserine phosphate. Is specific for L-homoserine and cannot use other substrates such D-serine, L-serine, D-threonine and L-threonine, galactose or D-homoserine in vitro. Required for susceptibility to the downy mildew pathogen Hyaloperonospora parasitica. The polypeptide is Homoserine kinase (HSK) (Arabidopsis thaliana (Mouse-ear cress)).